We begin with the raw amino-acid sequence, 143 residues long: Transcriptional regulator MraZ (143 aa).

SpoVT-AbrB domains follow at residues 5-47 (EFEH…PMTE) and 76-119 (ATEC…SAER).

This sequence belongs to the MraZ family. In terms of assembly, forms oligomers.

Its subcellular location is the cytoplasm. It localises to the nucleoid. The sequence is that of Transcriptional regulator MraZ from Levilactobacillus brevis (strain ATCC 367 / BCRC 12310 / CIP 105137 / JCM 1170 / LMG 11437 / NCIMB 947 / NCTC 947) (Lactobacillus brevis).